The sequence spans 330 residues: Ketol-acid reductoisomerase (NADP(+)) (330 aa).

The KARI N-terminal Rossmann domain occupies 1–182 (MKKVYYDQDA…GCTRAGVFET (182 aa)). Residues 25–28 (YGSQ), S51, S53, and 83–86 (DQIQ) each bind NADP(+). Residue H108 is part of the active site. Residue G134 coordinates NADP(+). Positions 183-328 (TFKEETETDL…AELRQMMPWL (146 aa)) constitute a KARI C-terminal knotted domain. 4 residues coordinate Mg(2+): D191, E195, E227, and E231. S252 contacts substrate.

It belongs to the ketol-acid reductoisomerase family. Requires Mg(2+) as cofactor.

The catalysed reaction is (2R)-2,3-dihydroxy-3-methylbutanoate + NADP(+) = (2S)-2-acetolactate + NADPH + H(+). The enzyme catalyses (2R,3R)-2,3-dihydroxy-3-methylpentanoate + NADP(+) = (S)-2-ethyl-2-hydroxy-3-oxobutanoate + NADPH + H(+). It functions in the pathway amino-acid biosynthesis; L-isoleucine biosynthesis; L-isoleucine from 2-oxobutanoate: step 2/4. The protein operates within amino-acid biosynthesis; L-valine biosynthesis; L-valine from pyruvate: step 2/4. Involved in the biosynthesis of branched-chain amino acids (BCAA). Catalyzes an alkyl-migration followed by a ketol-acid reduction of (S)-2-acetolactate (S2AL) to yield (R)-2,3-dihydroxy-isovalerate. In the isomerase reaction, S2AL is rearranged via a Mg-dependent methyl migration to produce 3-hydroxy-3-methyl-2-ketobutyrate (HMKB). In the reductase reaction, this 2-ketoacid undergoes a metal-dependent reduction by NADPH to yield (R)-2,3-dihydroxy-isovalerate. In Carboxydothermus hydrogenoformans (strain ATCC BAA-161 / DSM 6008 / Z-2901), this protein is Ketol-acid reductoisomerase (NADP(+)).